A 445-amino-acid polypeptide reads, in one-letter code: Arginine biosynthesis bifunctional protein ArgJ, mitochondrial (445 aa).

Substrate-binding residues include threonine 189, lysine 215, threonine 226, glutamate 312, asparagine 440, and serine 445. Threonine 226 (nucleophile) is an active-site residue.

The protein belongs to the ArgJ family. In terms of assembly, heterodimer of an alpha and a beta chain. Post-translationally, the alpha and beta chains are autoproteolytically processed from a single precursor protein within the mitochondrion.

Its subcellular location is the mitochondrion matrix. It carries out the reaction N(2)-acetyl-L-ornithine + L-glutamate = N-acetyl-L-glutamate + L-ornithine. The catalysed reaction is L-glutamate + acetyl-CoA = N-acetyl-L-glutamate + CoA + H(+). It participates in amino-acid biosynthesis; L-arginine biosynthesis; L-ornithine and N-acetyl-L-glutamate from L-glutamate and N(2)-acetyl-L-ornithine (cyclic): step 1/1. Its pathway is amino-acid biosynthesis; L-arginine biosynthesis; N(2)-acetyl-L-ornithine from L-glutamate: step 1/4. Functionally, catalyzes two activities which are involved in the cyclic version of arginine biosynthesis: the synthesis of acetylglutamate from glutamate and acetyl-CoA, and of ornithine by transacetylation between acetylornithine and glutamate. This Schizosaccharomyces pombe (strain 972 / ATCC 24843) (Fission yeast) protein is Arginine biosynthesis bifunctional protein ArgJ, mitochondrial.